The primary structure comprises 208 residues: Large ribosomal subunit protein bL9 (208 aa).

Positions 168-208 (GKVEKGSCTEGESLELGSVDNDINSGNVDSNESEKQDSVSE) are disordered. A compositionally biased stretch (polar residues) spans 188 to 197 (NDINSGNVDS). Positions 199 to 208 (ESEKQDSVSE) are enriched in basic and acidic residues.

It belongs to the bacterial ribosomal protein bL9 family.

Binds to the 23S rRNA. In Ehrlichia chaffeensis (strain ATCC CRL-10679 / Arkansas), this protein is Large ribosomal subunit protein bL9.